The chain runs to 489 residues: Ataxin-10 homolog (489 aa).

Belongs to the ataxin-10 family.

It localises to the cytoplasm. Functionally, may play a role in the regulation of cytokinesis. This is Ataxin-10 homolog (CTR86) from Debaryomyces hansenii (strain ATCC 36239 / CBS 767 / BCRC 21394 / JCM 1990 / NBRC 0083 / IGC 2968) (Yeast).